Here is a 696-residue protein sequence, read N- to C-terminus: uncharacterized protein (696 aa).

Transmembrane regions (helical) follow at residues 38 to 58 (IISI…NALA), 107 to 127 (LIYV…GYVV), 215 to 235 (AMAS…IFAL), 245 to 265 (SLFT…VVAL), 292 to 312 (TLPF…LIYL), 329 to 349 (VFFV…ILGE), 380 to 400 (FWVT…LTSA), 402 to 422 (FGAA…ACIG), 433 to 453 (FPSL…FLSS), and 457 to 477 (LVVA…IALP). 2 consecutive CBS domains span residues 527-587 (RSPE…PMSS) and 617-674 (IHPT…THTG).

The protein belongs to the chloride channel (TC 2.A.49) family.

The protein localises to the membrane. Functionally, voltage-gated chloride channel. This is an uncharacterized protein from Schizosaccharomyces pombe (strain 972 / ATCC 24843) (Fission yeast).